The following is a 504-amino-acid chain: Transcriptional coactivator YAP1 (504 aa).

Pro residues-rich tracts occupy residues 1-12 (MDPGQQPPPQPA) and 20-36 (PSQP…PGQP). The interval 1–59 (MDPGQQPPPQPAPQGQGQPPSQPPQGQGPPSGPGQPAPAATQAAPQAPPAGHQIVHVRG) is disordered. Residues 37 to 51 (APAATQAAPQAPPAG) are compositionally biased toward low complexity. S61 is modified (phosphoserine; by LATS1 and LATS2). T63 is modified (phosphothreonine). Residues 86–100 (MRLRKLPDSFFKPPE) are a coiled coil. N6-lactoyllysine is present on K90. Residues 91–114 (LPDSFFKPPEPKSHSRQASTDAGT) form a disordered region. Residue S105 is modified to Phosphoserine. S109 carries the post-translational modification Phosphoserine; by LATS1 and LATS2. T110 is modified (phosphothreonine). The residue at position 119 (T119) is a Phosphothreonine; by MAPK8 and MAPK9. Phosphoserine; by LATS1 and LATS2 is present on S127. Residues S128 and S131 each carry the phosphoserine modification. The segment at 133 to 158 (QLGAVSPGTLTPTGVVSGPAATPTAQ) is disordered. S138 is modified (phosphoserine; by MAPK8 and MAPK9). T154 is modified (phosphothreonine; by MAPK8 and MAPK9). Residue S164 is modified to Phosphoserine; by LATS1 and LATS2. WW domains are found at residues 171–204 (VPLP…DPRK) and 230–263 (GPLP…DPRL). Residues S274 and S289 each carry the phosphoserine modification. 2 disordered regions span residues 275–309 (QSAP…MRLQ) and 355–407 (LEQD…MSSY). Residues 291-504 (QGGVMGGSNS…LDKESFLTWL (214 aa)) form a transactivation domain region. Positions 298 to 359 (SNSNQQQQMR…SQLPTLEQDG (62 aa)) form a coiled coil. The span at 355-391 (LEQDGGTQNPVSSPGMSQELRTMTTNSSDPFLNSGTY) shows a compositional bias: polar residues. S367 is modified (phosphoserine; by MAPK8 and MAPK9). 4 positions are modified to phosphoserine: S371, S381, S382, and S388. Residue S397 is modified to Phosphoserine; by LATS1 and LATS2. Residues S400 and S403 each carry the phosphoserine; by CK1 modification. A Phosphotyrosine; by ABL1 modification is found at Y407. T412 is modified (phosphothreonine; by MAPK8 and MAPK9).

Belongs to the YAP1 family. Part of a complex when phosphorylated that contains DSG3, PKP1, YAP1 and YWHAG; the complex is required for localization of DSG3 and YAP1 to the cell membrane in keratinocytes. Binds to the SH3 domain of the YES kinase. Binds to WBP1 and WBP2. Binds, in vitro, through the WW1 domain, to neural isoforms of ENAH that contain the PPSY motif. The phosphorylated form interacts with YWHAB. Interacts (via WW domains) with LATS1 (via PPxY motif 2). Interacts with LATS2. Interacts with TEAD1, TEAD2, TEAD3 and TEAD4. Interacts with TP73. Interacts with RUNX1. Interacts with HCK. Interacts (via WW domains) with PTPN14 (via PPxY motif 2); this interaction leads to the cytoplasmic sequestration of YAP1 and inhibits its transcriptional coactivator activity. Interacts (when phosphorylated at Ser-127) with SMAD2, SMAD3 and WWTR1. Interacts with PRRG2 (via cytoplasmic domain). Interacts (via WW domains) with PRRG4 (via cytoplasmic domain). Interacts (phosphorylated) with CLDN18; the interaction sequesters YAP1 away from the nucleus and thereby restricts transcription of YAP1 target genes. Interacts with SMAD1. Interacts with AMOTL2, the interaction is required for ubiquitination of AMOTL2 and localization of YAP1 to tight junctions. Interacts with AMOT isoform 1; the interaction facilitates translocation of YAP1 to the cytoplasm and tight junctions. As to quaternary structure, interacts (via WW domain 1) with isoform 3 of ERBB4 (via PPxY motif 2). Post-translationally, phosphorylated by LATS1 and LATS2; leading to cytoplasmic translocation and inactivation. Phosphorylated by ABL1; leading to YAP1 stabilization, enhanced interaction with TP73 and recruitment onto proapoptotic genes; in response to DNA damage. Phosphorylation at Ser-400 and Ser-403 by CK1 is triggered by previous phosphorylation at Ser-397 by LATS proteins and leads to YAP1 ubiquitination by SCF(beta-TRCP) E3 ubiquitin ligase and subsequent degradation. Phosphorylated at Thr-119, Ser-138, Thr-154, Ser-367 and Thr-412 by MAPK8/JNK1 and MAPK9/JNK2, which is required for the regulation of apoptosis by YAP1. Phosphorylated in the nucleus by PRP4K; phosphorylation leads to nuclear exclusion. Lactylation by AARS1 promotes nuclear localization and stabilization of YAP1, leading to increased Hippo signaling pathway. Delactylated by SIRT1. In terms of processing, ubiquitinated by SCF(beta-TRCP) E3 ubiquitin ligase. As to expression, increased expression seen in some liver and prostate cancers. Isoforms lacking the transactivation domain found in striatal neurons of patients with Huntington disease (at protein level).

Its subcellular location is the cytoplasm. It is found in the nucleus. The protein resides in the cell junction. The protein localises to the tight junction. It localises to the cell membrane. Transcriptional regulator with dual roles as a coactivator and corepressor. Critical downstream regulatory target in the Hippo signaling pathway, crucial for organ size control and tumor suppression by restricting proliferation and promoting apoptosis. The Hippo signaling pathway core involves a kinase cascade featuring STK3/MST2 and STK4/MST1, along with its regulatory partner SAV1, which phosphorylates and activates LATS1/2 in complex with their regulatory protein, MOB1. This activation leads to the phosphorylation and inactivation of the YAP1 oncoprotein and WWTR1/TAZ. Phosphorylation of YAP1 by LATS1/2 prevents its nuclear translocation, thereby regulating the expression of its target genes. The transcriptional regulation of gene expression requires TEAD transcription factors and modulates cell growth, anchorage-independent growth, and induction of epithelial-mesenchymal transition (EMT). Plays a key role in tissue tension and 3D tissue shape by regulating the cortical actomyosin network, acting via ARHGAP18, a Rho GTPase activating protein that suppresses F-actin polymerization. It also suppresses ciliogenesis by acting as a transcriptional corepressor of TEAD4 target genes AURKA and PLK1. In conjunction with WWTR1, regulates TGFB1-dependent SMAD2 and SMAD3 nuclear accumulation. Synergizes with WBP2 to enhance PGR activity. Functionally, activates the C-terminal fragment (CTF) of ERBB4 (isoform 3). This chain is Transcriptional coactivator YAP1, found in Homo sapiens (Human).